The chain runs to 324 residues: Tumor necrosis factor receptor superfamily member 6 (324 aa).

Residues 1 to 21 (MLWIMAVLPLVLAGPELNVRM) form the signal peptide. Topologically, residues 22-171 (QGTDSIFEGL…CKKQSSNYKL (150 aa)) are extracellular. N-linked (GlcNAc...) asparagine glycosylation occurs at asparagine 43. TNFR-Cys repeat units follow at residues 43 to 79 (NCSE…PTCH), 80 to 123 (PCTE…NTKC), and 124 to 163 (RCKE…TKCK). 9 cysteine pairs are disulfide-bonded: cysteine 44/cysteine 55, cysteine 56/cysteine 69, cysteine 59/cysteine 78, cysteine 81/cysteine 97, cysteine 100/cysteine 115, cysteine 103/cysteine 123, cysteine 125/cysteine 139, cysteine 142/cysteine 154, and cysteine 145/cysteine 162. N-linked (GlcNAc...) asparagine glycans are attached at residues asparagine 114 and asparagine 132. The chain crosses the membrane as a helical span at residues 172–188 (LWLLILPGLAILFVFIY). The Cytoplasmic portion of the chain corresponds to 189–324 (KRYRKRQPGD…RNENEGQSLE (136 aa)). Positions 201-306 (SGIPSPESVP…EEIQAMVWED (106 aa)) are interaction with HIPK3. A Phosphoserine modification is found at serine 214. Residues 219–243 (NKYIWRTAEKMKICDAKKFARQHKI) form an interaction with CALM region. A Death domain is found at 219–303 (NKYIWRTAEK…DIAEEIQAMV (85 aa)).

As to quaternary structure, component of the death-induced signaling complex (DISC) composed of cell surface receptor FAS/CD95, adapter protein FADD and the CASP8 protease; recruitment of CASP8 to the complex is required for processing of CASP8 into the p18 and p10 subunits. Interacts directly (via DED domain) with NOL3 (via CARD domain); inhibits death-inducing signaling complex (DISC) assembly by inhibiting the increase in FAS-FADD binding induced by FAS activation. Binds DAXX. Interacts with HIPK3. Part of a complex containing HIPK3 and FADD. Binds RIPK1 and FAIM2. Interacts with BABAM2 and FEM1B. Interacts with CALM. In the absence of stimulation, interacts with BIRC2, DDX3X and GSK3B. The interaction with BIRC2 and DDX3X is further enhanced upon receptor stimulation and accompanied by DDX3X and BIRC2 cleavage. Post-translationally, palmitoylated. Palmitoylation by ZDHHC7 prevents the lysosomal degradation of FAS regulating its expression at the plasma membrane.

It localises to the cell membrane. Its subcellular location is the membrane raft. In terms of biological role, receptor for TNFSF6/FASLG. The adapter molecule FADD recruits caspase CASP8 to the activated receptor. The resulting death-inducing signaling complex (DISC) performs CASP8 proteolytic activation which initiates the subsequent cascade of caspases (aspartate-specific cysteine proteases) mediating apoptosis. FAS-mediated apoptosis may have a role in the induction of peripheral tolerance, in the antigen-stimulated suicide of mature T-cells, or both. This chain is Tumor necrosis factor receptor superfamily member 6 (Fas), found in Rattus norvegicus (Rat).